We begin with the raw amino-acid sequence, 273 residues long: Putative pyruvate, phosphate dikinase regulatory protein (273 aa).

149–156 (GPSRTSKT) serves as a coordination point for ADP.

Belongs to the pyruvate, phosphate/water dikinase regulatory protein family. PDRP subfamily.

It carries out the reaction N(tele)-phospho-L-histidyl/L-threonyl-[pyruvate, phosphate dikinase] + ADP = N(tele)-phospho-L-histidyl/O-phospho-L-threonyl-[pyruvate, phosphate dikinase] + AMP + H(+). The catalysed reaction is N(tele)-phospho-L-histidyl/O-phospho-L-threonyl-[pyruvate, phosphate dikinase] + phosphate + H(+) = N(tele)-phospho-L-histidyl/L-threonyl-[pyruvate, phosphate dikinase] + diphosphate. Its function is as follows. Bifunctional serine/threonine kinase and phosphorylase involved in the regulation of the pyruvate, phosphate dikinase (PPDK) by catalyzing its phosphorylation/dephosphorylation. The polypeptide is Putative pyruvate, phosphate dikinase regulatory protein (Rickettsia akari (strain Hartford)).